Reading from the N-terminus, the 531-residue chain is DNA damage-binding protein cmr1 (531 aa).

Disordered regions lie at residues 37-83 (GIFP…RGIA) and 218-264 (DASQ…MHIH). A compositionally biased stretch (basic residues) spans 53 to 64 (KPKKKPAPKKIK). One copy of the WD 1 repeat lies at 186–227 (VTPERIYTMTFHPSEAKPLIFAGDKMGNLGVLDASQERPVSS). Residues 233–245 (GDEEEQEDDDDPD) show a composition bias toward acidic residues. WD repeat units follow at residues 253–293 (PHTR…SVET), 300–340 (SDDV…RTAV), 345–385 (LSEK…HDDP), 392–431 (LSRLSVSHAAFNSAGQVATSSYDDSLKIYDFGAKGIASWE), 454–497 (GRWV…LAQL), and 500–531 (DGITAVPAVAVFHRSKNWIAGGTASGKICLWM).

Belongs to the WD repeat DDB2/WDR76 family.

In terms of biological role, DNA-binding protein that binds to both single- and double-stranded DNA. Binds preferentially to UV-damaged DNA. May be involved in DNA-metabolic processes. The protein is DNA damage-binding protein cmr1 of Aspergillus clavatus (strain ATCC 1007 / CBS 513.65 / DSM 816 / NCTC 3887 / NRRL 1 / QM 1276 / 107).